The chain runs to 592 residues: Aspartate--tRNA(Asp/Asn) ligase (592 aa).

E173 contributes to the L-aspartate binding site. The interval Q197–K200 is aspartate. Residue R219 coordinates L-aspartate. ATP contacts are provided by residues R219 to E221 and Q228. Residue H451 participates in L-aspartate binding. E486 contributes to the ATP binding site. Residue R493 coordinates L-aspartate. Position 538–541 (G538–R541) interacts with ATP.

The protein belongs to the class-II aminoacyl-tRNA synthetase family. Type 1 subfamily. In terms of assembly, homodimer.

It localises to the cytoplasm. It catalyses the reaction tRNA(Asx) + L-aspartate + ATP = L-aspartyl-tRNA(Asx) + AMP + diphosphate. In terms of biological role, aspartyl-tRNA synthetase with relaxed tRNA specificity since it is able to aspartylate not only its cognate tRNA(Asp) but also tRNA(Asn). Reaction proceeds in two steps: L-aspartate is first activated by ATP to form Asp-AMP and then transferred to the acceptor end of tRNA(Asp/Asn). This Alkalilimnicola ehrlichii (strain ATCC BAA-1101 / DSM 17681 / MLHE-1) protein is Aspartate--tRNA(Asp/Asn) ligase.